The following is a 445-amino-acid chain: MKTQEIMTMLEAKHPGESEFLQAVKEVLLSVEEVYNQHPEFEKNGIIERIVEPDRVFTFRVPWVDDQGKVQVNIGYRVQFNNAIGPYKGGIRFHPSVNLSILKFLGFEQMFKNALTTLPMGGGKGGADFSPKGKSEAEIMRFCQSFMTELWRNIGPDTDIPAGDIGVGGREVGYMFGMYKKLAREHTGTLTGKGFEFGGSRLRPESTGFGAVYFVQNMCKQNGVDYKGKTLAISGFGNVAWGVAQKATELGIKVVTISGPDGYVYDPDGINTPEKFRCMLDLRDSGNDVVSDYVKRFPNAQFFPGKKPWEQKVDFAMPCATQNEMNLEDAKTLHKNGVTLVAETSNMGCTAEASEYYVANKMLFAPGKAVNAGGVSCSGLEMTQNAMHLVWTNEEVDKWLHQIMQDIHEQCVTYGKDGNYIDYVKGANIAGFMKVAKAMVAQGVC.

The active site involves Lys124.

This sequence belongs to the Glu/Leu/Phe/Val dehydrogenases family. As to quaternary structure, homohexamer.

Its subcellular location is the cell surface. It catalyses the reaction L-glutamate + NAD(+) + H2O = 2-oxoglutarate + NH4(+) + NADH + H(+). In terms of biological role, probably involved in degradation rather than biosynthesis of glutamate. In Porphyromonas gingivalis (strain ATCC 33277 / DSM 20709 / CIP 103683 / JCM 12257 / NCTC 11834 / 2561), this protein is NAD-specific glutamate dehydrogenase (gdh).